We begin with the raw amino-acid sequence, 190 residues long: uncharacterized protein (190 aa).

It to Synechocystis PCC 6803 sll1609 and slr1290.

This is an uncharacterized protein from Synechocystis sp. (strain ATCC 27184 / PCC 6803 / Kazusa).